Consider the following 289-residue polypeptide: uncharacterized protein (289 aa).

The N-terminal stretch at 1 to 19 (MAKWLGAPLARGVSTATRA) is a signal peptide. The next 2 membrane-spanning stretches (helical) occupy residues 90–110 (GLLA…GWGV) and 257–277 (AALS…LVFA).

It is found in the cell membrane. This is an uncharacterized protein from Mycobacterium tuberculosis (strain CDC 1551 / Oshkosh).